Reading from the N-terminus, the 383-residue chain is Cysteine protease StiP (383 aa).

The protein belongs to the cysteine protease StiP family. Post-translationally, is probably processed via an autocatalytic removal of a proregion of about 100 amino acids.

Its activity is regulated as follows. Is inhibited by bromopyruvate in vitro. Activity is not affected by the presence of tellurite. Cysteine protease that may play a role in regulating cell morphology in response to stressful conditions which likely cause oxidative damage. Appears to catalyze its own cleavage, which probably leads to its activation. This chain is Cysteine protease StiP (stiP), found in Acinetobacter baylyi (strain ATCC 33305 / BD413 / ADP1).